Here is a 335-residue protein sequence, read N- to C-terminus: MENLQLVLFVLGAVAIIAVLVHGFWSIRRQQPKSLKESPMTGLYTDKTRDSDGFDADGVGPVRVVKNNAEQGIPKATSTSRATPFGARAQESEPADVSPSFSLSDEPKQKAPRSRQEPVMSATPNEEVSDAHLEQMELGLGQAPAQPSLFEDPVTERKQEAVRPAPRVEAPQSVAPASVEPVSVEPEPAPKVAEETPLGDPQDVLVLHVVAKEGEALNGAELLPSLLTLNFKFGDMDIFHRHEDNAGTGKVLFSLANMVKPGVFNPDEMEQFTTQGIVLFMTLPCYGDPLMNFSIMLNSAHQLADDLGGEVLDGGRGAWSEQTKQSYLQRIRAQM.

The Periplasmic segment spans residues 1–6; that stretch reads MENLQL. Residues 7 to 27 traverse the membrane as a helical segment; sequence VLFVLGAVAIIAVLVHGFWSI. At 28-335 the chain is on the cytoplasmic side; it reads RRQQPKSLKE…SYLQRIRAQM (308 aa). Disordered stretches follow at residues 37–128 and 163–185; these read ESPM…NEEV and RPAP…VSVE. Residues 170-185 show a composition bias toward low complexity; it reads APQSVAPASVEPVSVE.

The protein belongs to the ZipA family. As to quaternary structure, interacts with FtsZ via their C-terminal domains.

It is found in the cell inner membrane. Essential cell division protein that stabilizes the FtsZ protofilaments by cross-linking them and that serves as a cytoplasmic membrane anchor for the Z ring. Also required for the recruitment to the septal ring of downstream cell division proteins. This chain is Cell division protein ZipA, found in Shewanella loihica (strain ATCC BAA-1088 / PV-4).